A 101-amino-acid chain; its full sequence is Protein RALF-like 14 (101 aa).

An N-terminal signal peptide occupies residues 1–21 (MKLLIFAVIISVVLFPVLVSS). A propeptide spans 22–56 (RTIKCDQLSGKCINGEEKEIMNMRLGLDVSSRRIL) (removed in mature form). A disulfide bridge connects residues C90 and C96.

Belongs to the plant rapid alkalinization factor (RALF) family. In terms of processing, proteolytically cleaved, probably by S1P, a subtilisin-like serine protease (subtilase).

It localises to the secreted. Functionally, cell signaling peptide that may regulate plant stress, growth, and development. Mediates a rapid alkalinization of extracellular space by mediating a transient increase in the cytoplasmic Ca(2+) concentration leading to a calcium-dependent signaling events through a cell surface receptor and a concomitant activation of some intracellular mitogen-activated protein kinases. The polypeptide is Protein RALF-like 14 (RALFL14) (Arabidopsis thaliana (Mouse-ear cress)).